Reading from the N-terminus, the 110-residue chain is Large ribosomal subunit protein uL22 (110 aa).

Basic residues predominate over residues 84-95; that stretch reads ARGTASKIRKPT. Residues 84-110 are disordered; it reads ARGTASKIRKPTSHVMVEVSKPEKKEA.

Belongs to the universal ribosomal protein uL22 family. Part of the 50S ribosomal subunit.

In terms of biological role, this protein binds specifically to 23S rRNA; its binding is stimulated by other ribosomal proteins, e.g. L4, L17, and L20. It is important during the early stages of 50S assembly. It makes multiple contacts with different domains of the 23S rRNA in the assembled 50S subunit and ribosome. Functionally, the globular domain of the protein is located near the polypeptide exit tunnel on the outside of the subunit, while an extended beta-hairpin is found that lines the wall of the exit tunnel in the center of the 70S ribosome. The chain is Large ribosomal subunit protein uL22 from Campylobacter concisus (strain 13826).